A 310-amino-acid polypeptide reads, in one-letter code: Cytosolic Fe-S cluster assembly factor Nubp1 homolog (310 aa).

Residues Cys-9, Cys-23, Cys-26, and Cys-32 each contribute to the [4Fe-4S] cluster site. 63-70 (GKGGVGKS) contacts ATP. [4Fe-4S] cluster contacts are provided by Cys-240 and Cys-243.

The protein belongs to the Mrp/NBP35 ATP-binding proteins family. NUBP1/NBP35 subfamily. In terms of assembly, heterotetramer of 2 Nubp1 and 2 Nubp2 chains. [4Fe-4S] cluster serves as cofactor.

Its subcellular location is the cytoplasm. In terms of biological role, component of the cytosolic iron-sulfur (Fe/S) protein assembly (CIA) machinery. Required for maturation of extramitochondrial Fe-S proteins. The Nubp1-Nubp2 heterotetramer forms a Fe-S scaffold complex, mediating the de novo assembly of an Fe-S cluster and its transfer to target apoproteins. The chain is Cytosolic Fe-S cluster assembly factor Nubp1 homolog from Drosophila virilis (Fruit fly).